The following is an 83-amino-acid chain: Phytosulfokines 4 (83 aa).

The N-terminal stretch at 1 to 28 (MAARTVAVAAALAVLLIFAASSATVAMA) is a signal peptide. Residues 29 to 74 (GRPTPTTSLDEEAAQAAAQSEIGGGCKEGEGEEECLARRTLTAHTD) constitute a propeptide that is removed on maturation. 2 positions are modified to sulfotyrosine: Tyr75 and Tyr77. Residues 80 to 83 (QHHN) constitute a propeptide that is removed on maturation.

It belongs to the phytosulfokine family. Post-translationally, sulfation is important for activity and for the binding to a putative membrane receptor. PSK-alpha is produced by endopeptidase digestion. PSK-beta is produced from PSK-alpha by exopeptidase digestion.

It localises to the secreted. Its function is as follows. Promotes plant cell differentiation, organogenesis and somatic embryogenesis as well as cell proliferation. This is Phytosulfokines 4 (PSK4) from Oryza sativa subsp. japonica (Rice).